The chain runs to 203 residues: Small ribosomal subunit protein uS4 (203 aa).

The region spanning 93 to 153 (RRFDNVVFRA…QKSQNLDAVA (61 aa)) is the S4 RNA-binding domain.

Belongs to the universal ribosomal protein uS4 family. In terms of assembly, part of the 30S ribosomal subunit. Contacts protein S5. The interaction surface between S4 and S5 is involved in control of translational fidelity.

One of the primary rRNA binding proteins, it binds directly to 16S rRNA where it nucleates assembly of the body of the 30S subunit. Functionally, with S5 and S12 plays an important role in translational accuracy. This Chlorobium phaeobacteroides (strain BS1) protein is Small ribosomal subunit protein uS4.